The sequence spans 442 residues: 3-phosphoshikimate 1-carboxyvinyltransferase (442 aa).

3-phosphoshikimate-binding residues include lysine 25, serine 26, and arginine 30. Lysine 25 lines the phosphoenolpyruvate pocket. Positions 97 and 125 each coordinate phosphoenolpyruvate. The 3-phosphoshikimate site is built by serine 170, glutamine 172, aspartate 323, and lysine 350. Position 172 (glutamine 172) interacts with phosphoenolpyruvate. The Proton acceptor role is filled by aspartate 323. The phosphoenolpyruvate site is built by arginine 354 and arginine 399.

The protein belongs to the EPSP synthase family. Monomer.

The protein resides in the cytoplasm. It carries out the reaction 3-phosphoshikimate + phosphoenolpyruvate = 5-O-(1-carboxyvinyl)-3-phosphoshikimate + phosphate. It participates in metabolic intermediate biosynthesis; chorismate biosynthesis; chorismate from D-erythrose 4-phosphate and phosphoenolpyruvate: step 6/7. Its function is as follows. Catalyzes the transfer of the enolpyruvyl moiety of phosphoenolpyruvate (PEP) to the 5-hydroxyl of shikimate-3-phosphate (S3P) to produce enolpyruvyl shikimate-3-phosphate and inorganic phosphate. The sequence is that of 3-phosphoshikimate 1-carboxyvinyltransferase from Bartonella quintana (strain Toulouse) (Rochalimaea quintana).